A 1870-amino-acid chain; its full sequence is Dedicator of cytokinesis protein 5 (1870 aa).

Residues 8–69 (KRQKYGVAIY…PETYIHLKEA (62 aa)) form the SH3 domain. Position 365 is a phosphoserine (Ser365). Residues 443 to 627 (RNDIYVTLIH…DSFQIATLIC (185 aa)) enclose the C2 DOCK-type domain. N6-acetyllysine is present on Lys818. Positions 1231 to 1642 (YKEKKREDIY…VEKHYGVITL (412 aa)) constitute a DOCKER domain. The tract at residues 1679–1702 (VVSTSSNSSDNAPSRPGSDGSILE) is disordered. Residues Ser1756, Ser1766, Ser1785, and Ser1789 each carry the phosphoserine modification. The segment at 1772–1870 (NRLSPFHGSS…GIPTSEPGSQ (99 aa)) is disordered. Positions 1784–1794 (QSTPLSPPPLT) are enriched in pro residues. The residue at position 1794 (Thr1794) is a Phosphothreonine. Residues 1797–1808 (ATRTLSSPSLQT) are compositionally biased toward polar residues. Thr1814 carries the post-translational modification Phosphothreonine. Pro residues predominate over residues 1815-1824 (PVPPPPPPKS). Phosphoserine is present on residues Ser1834 and Ser1869.

This sequence belongs to the DOCK family. As to quaternary structure, interacts with CRK and CRKL. Interacts (via N-terminus) with tensin TNS3 (via N-terminus); the interaction increases DOCK5 guanine nucleotide exchange activity towards Rac. Interacts with ELMO1.

Its subcellular location is the cytoplasm. It localises to the cell membrane. The protein resides in the cell projection. It is found in the podosome. Functionally, guanine nucleotide exchange factor (GEF) for Rho and Rac. GEF proteins activate small GTPases by exchanging bound GDP for free GTP. Along with DOCK1, mediates CRK/CRKL regulation of epithelial and endothelial cell spreading and migration on type IV collagen. This Homo sapiens (Human) protein is Dedicator of cytokinesis protein 5 (DOCK5).